A 214-amino-acid polypeptide reads, in one-letter code: Ribosomal RNA small subunit methyltransferase G (214 aa).

Residues Gly-81, Met-86, 132–133, and Arg-147 each bind S-adenosyl-L-methionine; that span reads VE.

The protein belongs to the methyltransferase superfamily. RNA methyltransferase RsmG family.

The protein resides in the cytoplasm. It catalyses the reaction guanosine(527) in 16S rRNA + S-adenosyl-L-methionine = N(7)-methylguanosine(527) in 16S rRNA + S-adenosyl-L-homocysteine. In terms of biological role, specifically methylates the N7 position of guanine in position 527 of 16S rRNA. This Pseudomonas fluorescens (strain Pf0-1) protein is Ribosomal RNA small subunit methyltransferase G.